Here is a 540-residue protein sequence, read N- to C-terminus: Chaperonin GroEL 2 (540 aa).

ATP-binding positions include 30–33, K51, 87–91, G415, 480–482, and D496; these read TLGP, DGTTT, and NAL.

Belongs to the chaperonin (HSP60) family. Forms a cylinder of 14 subunits composed of two heptameric rings stacked back-to-back. Interacts with the co-chaperonin GroES.

It is found in the cytoplasm. It carries out the reaction ATP + H2O + a folded polypeptide = ADP + phosphate + an unfolded polypeptide.. In terms of biological role, together with its co-chaperonin GroES, plays an essential role in assisting protein folding. The GroEL-GroES system forms a nano-cage that allows encapsulation of the non-native substrate proteins and provides a physical environment optimized to promote and accelerate protein folding. This Protochlamydia amoebophila (strain UWE25) protein is Chaperonin GroEL 2.